Here is a 261-residue protein sequence, read N- to C-terminus: Potassium/proton antiporter CemA (261 aa).

A run of 2 helical transmembrane segments spans residues 47-67 (FLVFLPWGISISFQEGLGPWV) and 138-158 (IISHLLTNMICFAISSAYFIM).

Belongs to the CemA family.

Its subcellular location is the plastid. It localises to the chloroplast inner membrane. The enzyme catalyses K(+)(in) + H(+)(out) = K(+)(out) + H(+)(in). In terms of biological role, contributes to K(+)/H(+) antiport activity by supporting proton efflux to control proton extrusion and homeostasis in chloroplasts in a light-dependent manner to modulate photosynthesis. Prevents excessive induction of non-photochemical quenching (NPQ) under continuous-light conditions. Indirectly promotes efficient inorganic carbon uptake into chloroplasts. The chain is Potassium/proton antiporter CemA from Ginkgo biloba (Ginkgo).